Here is a 337-residue protein sequence, read N- to C-terminus: MKIAVDAMGGDHAPKEIVLGVMKAVAQYKDIEILLFGDETKINEHLTDKTRVKIIHTDEKIESDDEPVRAVKRKKKASMVLAAQAVKDGEADACISAGNTGALMSTGLFVIGRIKGIDRPALAPTLPTVTGKGFVMLDLGANAEAKPEHLLQFGLMGSVYAEKVRKIERPRVALLNIGTEETKGNELTKKSFELMKNQDAYEFIGNIEARDLLMDVADVVVTDGFTGNMVLKSIEGTGAAFLSMLKMSLLNGFKNKVAASFLKKDLMELKAKMDYSEYGGACLFGVQAPVVKAHGSSNANGIFTTIRQVREMVEKQVVETIKSEVDKVKVGGTETND.

This sequence belongs to the PlsX family. Homodimer. Probably interacts with PlsY.

Its subcellular location is the cytoplasm. The catalysed reaction is a fatty acyl-[ACP] + phosphate = an acyl phosphate + holo-[ACP]. It functions in the pathway lipid metabolism; phospholipid metabolism. Catalyzes the reversible formation of acyl-phosphate (acyl-PO(4)) from acyl-[acyl-carrier-protein] (acyl-ACP). This enzyme utilizes acyl-ACP as fatty acyl donor, but not acyl-CoA. The protein is Phosphate acyltransferase of Listeria innocua serovar 6a (strain ATCC BAA-680 / CLIP 11262).